The following is a 173-amino-acid chain: 5-hydroxymethyl-dUMP N-hydrolase (173 aa).

Alanine 2 carries the post-translational modification N-acetylalanine. Position 16 (glycine 16) interacts with 5-hydroxymethyl-dUMP. Residue serine 17 is modified to Phosphoserine. 6 residues coordinate 5-hydroxymethyl-dUMP: isoleucine 18, arginine 19, glycine 20, serine 87, glycine 89, and glutamate 93. Phosphoserine is present on serine 87. 4 positions are modified to phosphoserine: serine 112, serine 117, serine 127, and serine 158. 5-hydroxymethyl-dUMP is bound at residue serine 117.

This sequence belongs to the 2'-deoxynucleoside 5'-phosphate N-hydrolase 1 family. As to quaternary structure, monomer and homodimer.

The protein resides in the cytoplasm. The protein localises to the nucleus. The catalysed reaction is 5-hydroxymethyl-dUMP + H2O = 5-hydroxymethyluracil + 2-deoxy-D-ribose 5-phosphate. Part of a nucleotide salvage pathway that eliminates epigenetically modified 5-hydroxymethyl-dCMP (hmdCMP) in a two-step process entailing deamination to cytotoxic 5-hydroxymethyl-dUMP (hmdUMP), followed by its hydrolysis into 5-hydroxymethyluracil (hmU) and 2-deoxy-D-ribose 5-phosphate (deoxyribosephosphate). Catalyzes the second step in that pathway, the hydrolysis of the N-glycosidic bond in hmdUMP, degrading this cytotoxic nucleotide to avoid its genomic integration. The sequence is that of 5-hydroxymethyl-dUMP N-hydrolase from Mus musculus (Mouse).